Here is an 870-residue protein sequence, read N- to C-terminus: Valine--tRNA ligase (870 aa).

The 'HIGH' region motif lies at 42-52 (PNVTGVLHIGH). The 'KMSKS' region motif lies at 527-531 (KMSKS). An ATP-binding site is contributed by Lys-530. The stretch at 800–870 (LENVDLSGIL…ISVELQNLRG (71 aa)) forms a coiled coil.

The protein belongs to the class-I aminoacyl-tRNA synthetase family. ValS type 1 subfamily. As to quaternary structure, monomer.

The protein localises to the cytoplasm. It catalyses the reaction tRNA(Val) + L-valine + ATP = L-valyl-tRNA(Val) + AMP + diphosphate. Its function is as follows. Catalyzes the attachment of valine to tRNA(Val). As ValRS can inadvertently accommodate and process structurally similar amino acids such as threonine, to avoid such errors, it has a 'posttransfer' editing activity that hydrolyzes mischarged Thr-tRNA(Val) in a tRNA-dependent manner. The protein is Valine--tRNA ligase of Campylobacter jejuni subsp. jejuni serotype O:2 (strain ATCC 700819 / NCTC 11168).